A 157-amino-acid polypeptide reads, in one-letter code: MAKGEFRLCDVVLDDTIGRSTPDVEHERAVAIFDLIEENRFEPLGHAGGPYRLNISLVDSKLVFAITTEEGGGVATHILSLTPFRRIVKDYFMICESYYEAIRSSTPSRIEAIDMGRRGIHNEGSQTLKDRLAGKIEVDFDTARRLFTLVCVLYWRG.

Belongs to the UPF0262 family.

The sequence is that of UPF0262 protein RL0614 from Rhizobium johnstonii (strain DSM 114642 / LMG 32736 / 3841) (Rhizobium leguminosarum bv. viciae).